Here is a 444-residue protein sequence, read N- to C-terminus: E1B 55 kDa protein (444 aa).

The disordered stretch occupies residues 1–27 (MEQDSDLESGRATNQRPPRVRVRGAGV). Residues Ser438 and Ser439 each carry the phosphoserine modification.

The protein belongs to the adenoviridae E1B 55 kDa protein family. As to quaternary structure, interacts with host PML-4 and PML-5; this interaction promotes efficient subnuclear targeting of E1B-55K to PML nuclear bodies. Interacts with E4-ORF3 protein. Interacts with E4-ORF6 protein.

It is found in the host nucleus. The protein resides in the host cytoplasm. In terms of biological role, plays a major role to prevent cellular inhibition of viral genome replication. Assembles an SCF-like E3 ubiquitin ligase complex based on the cellular proteins ELOB, ELOC, CUL5 and RBX1, in cooperation with viral E4orf6. This viral RING-type ligase ubiquitinates cellular substrates and targets them to proteasomal degradation: TP53/p53, LIG4, MRE11-RAD50-NBS1 (MRN) complex, ITGA3, DAXX and BLM. E1B-55K probably acts as the substrate-specific adapter of the SCF-like E3 ubiquitin ligase complex. Degradation of host TP53/p53 activity is essential for preventing E1A-induced TP53 accumulation that would otherwise lead to cell apoptosis and growth arrest. E1B-55K also inactivates TP53 transcription-factor activity by binding its transactivation domain. E1B-55K also functions as a SUMO1 E3 ligase for TP53 which causes the latter to be sequestered in promyelocytic leukemia (PML) nuclear bodies thereby contributing to maximal inhibition of TP53 function. The polypeptide is E1B 55 kDa protein (Canis lupus familiaris (Dog)).